Reading from the N-terminus, the 580-residue chain is Probable inositol transporter 2 (580 aa).

12 consecutive transmembrane segments (helical) span residues 36–56 (GIGG…LLYI), 71–91 (EMIV…GGWA), 106–126 (FLFL…LLVV), 129–149 (VFVG…ISEA), 156–176 (GALV…SYLI), 189–209 (WMLG…FTLP), 275–295 (GLIA…NTVM), 315–335 (LLSL…IYFI), 343–363 (LLII…GVFY), 452–472 (FGWF…PGMG), 490–510 (ICGG…AQSF), and 521–541 (WTFL…MVCV).

Belongs to the major facilitator superfamily. Sugar transporter (TC 2.A.1.1) family. In terms of tissue distribution, expressed in the tapetum, but not in pollen grains. Detected in leaf vascular tissue and in roots.

It is found in the cell membrane. With respect to regulation, inhibited by nickel and to a lesser extent by cobalt. In terms of biological role, plasma membrane inositol-proton symporter. Specific for several inositol epimers, such as myoinositol and scylloinositol. D-chiroinositol, mucoinositol, alloinositol and pinitol are also transported with a lower activity. Not active with galactinol and phytate. This chain is Probable inositol transporter 2 (INT2), found in Arabidopsis thaliana (Mouse-ear cress).